A 328-amino-acid chain; its full sequence is Probable cell division protein WhiA (328 aa).

The segment at residues 276–309 is a DNA-binding region (H-T-H motif); that stretch reads SLEELGRLADPQMTKDAVAGRIRRLLHMADKKAS.

Belongs to the WhiA family.

In terms of biological role, involved in cell division and chromosome segregation. The sequence is that of Probable cell division protein WhiA from Corynebacterium diphtheriae (strain ATCC 700971 / NCTC 13129 / Biotype gravis).